A 398-amino-acid polypeptide reads, in one-letter code: G2/mitotic-specific cyclin-B2 (398 aa).

2 disordered regions span residues 1–26 (MALL…KPKS) and 53–76 (AQNT…KPTA). Thr8 carries the post-translational modification Phosphothreonine. Positions 8 to 23 (TVSTDLENNDTGVNSK) are enriched in polar residues. Residues 55–69 (NTKVPVPPTKTTNVN) are compositionally biased toward low complexity. Phosphoserine is present on residues Ser77 and Ser92. Thr94 is subject to Phosphothreonine. Phosphoserine occurs at positions 99, 392, and 398.

Belongs to the cyclin family. Cyclin AB subfamily. As to quaternary structure, interacts with the CDK1 protein kinase to form a serine/threonine kinase holoenzyme complex also known as maturation promoting factor (MPF). The cyclin subunit imparts substrate specificity to the complex.

Essential for the control of the cell cycle at the G2/M (mitosis) transition. The protein is G2/mitotic-specific cyclin-B2 (CCNB2) of Bos taurus (Bovine).